Here is a 276-residue protein sequence, read N- to C-terminus: Homeobox-leucine zipper protein HOX22 (276 aa).

The homeobox DNA-binding region spans 70–130; sequence AGERKRRFTE…NKRARWRSKQ (61 aa). Positions 129–173 are leucine-zipper; it reads KQLEHDYAALRSKYDALHSRVESLKQEKLALTVQLHELRERLRER. The segment at 170 to 212 is disordered; that stretch reads LREREERSGNGGAATTAASSSSCNGSGSEEVDDDDDKRNAAAG. A compositionally biased stretch (low complexity) spans 182–197; sequence AATTAASSSSCNGSGS.

This sequence belongs to the HD-ZIP homeobox family. Class I subfamily. Expressed in seedlings, roots, stems, leaf sheaths and blades and panicles.

It localises to the nucleus. In terms of biological role, probable transcription factor. In Oryza sativa subsp. japonica (Rice), this protein is Homeobox-leucine zipper protein HOX22 (HOX22).